Reading from the N-terminus, the 39-residue chain is Ribonuclease UK114 (39 aa).

Belongs to the RutC family. As to quaternary structure, monomer. The N-terminus may be blocked. Mainly expressed in the liver and kidney. Lower expression found in intestine, gizzard, glandular stomach, heart, brain and spleen.

The protein localises to the cytoplasm. Endoribonuclease responsible for the inhibition of the translation by cleaving mRNA. Inhibits cell-free protein synthesis. Cleaves phosphodiester bonds only in single-stranded RNA. This chain is Ribonuclease UK114, found in Gallus gallus (Chicken).